The chain runs to 446 residues: Protein odr-4 homolog (446 aa).

The chain crosses the membrane as a helical span at residues 76 to 96 (ASQVGRMLPGGLMVLGVFLMT). Residues 394–415 (HPEKRESEPASQHLESKPENKA) show a composition bias toward basic and acidic residues. The interval 394–417 (HPEKRESEPASQHLESKPENKARS) is disordered. The helical transmembrane segment at 426 to 446 (GLVISTIVASIAIIISFYYIM) threads the bilayer.

The protein belongs to the ODR-4 family.

It localises to the membrane. In terms of biological role, may play a role in the trafficking of a subset of G-protein coupled receptors. The protein is Protein odr-4 homolog (odr4) of Xenopus laevis (African clawed frog).